Reading from the N-terminus, the 323-residue chain is Transcription factor MafB (323 aa).

Lys-32 participates in a covalent cross-link: Glycyl lysine isopeptide (Lys-Gly) (interchain with G-Cter in SUMO). Basic and acidic residues predominate over residues 34–43 (EPLGRAERPG). 2 disordered regions span residues 34-78 (EPLG…PTEP) and 116-210 (PVPQ…VEDR). Low complexity predominate over residues 54 to 77 (SVSSTPLSTPCSSVPSSPSFSPTE). Basic residues-rich tracts occupy residues 129 to 143 (SAHHHHHHHHPHPHH) and 159 to 168 (AHPHHHHHHQ). The span at 192–201 (PHATAAATAA) shows a compositional bias: low complexity. The tract at residues 238-263 (RLKQKRRTLKNRGYAQSCRYKRVQQK) is basic motif. Residues 238-301 (RLKQKRRTLK…DAYKVKCEKL (64 aa)) enclose the bZIP domain. The segment at 266–287 (LENEKTQLIQQVEQLKQEVSRL) is leucine-zipper. Lys-297 participates in a covalent cross-link: Glycyl lysine isopeptide (Lys-Gly) (interchain with G-Cter in SUMO).

This sequence belongs to the bZIP family. Maf subfamily. In terms of assembly, homodimer or heterodimer with other bHLH-Zip transcription factors. Forms homodimers and heterodimers with FOS, FOSB and FOSL2, but not with JUN proteins (JUN, JUNB and JUND). Interacts with the intracellular cytoplasmic domain of LRP1 (LRPICD); the interaction results in a moderate reduction of MAFB transcriptional potential. Binds DNA as a homodimer or a heterodimer. Interacts with PAX6; the interaction is direct. Interacts with ETS1 and LRP1. In terms of processing, sumoylated. Sumoylation on Lys-32 and Lys-297 stimulates its transcriptional repression activity and promotes macrophage differentiation from myeloid progenitors. As to expression, expressed in pancreatic alpha-cells (glucagon-positive cells), in podocytes of the kidney and macrophages (at protein level). Most abundant in kidney, gut, lung and brain.

The protein localises to the nucleus. Acts as a transcriptional activator or repressor. Plays a pivotal role in regulating lineage-specific hematopoiesis by repressing ETS1-mediated transcription of erythroid-specific genes in myeloid cells. Required for monocytic, macrophage, osteoclast, podocyte and islet beta cell differentiation. Involved in renal tubule survival and F4/80 maturation. Activates the insulin and glucagon promoters. Together with PAX6, transactivates weakly the glucagon gene promoter through the G1 element. SUMO modification controls its transcriptional activity and ability to specify macrophage fate. Binds element G1 on the glucagon promoter. Involved either as an oncogene or as a tumor suppressor, depending on the cell context. Required for the transcriptional activation of HOXB3 in the rhombomere r5 in the hindbrain. The protein is Transcription factor MafB (Mafb) of Mus musculus (Mouse).